Reading from the N-terminus, the 388-residue chain is Chorismate synthase (388 aa).

NADP(+) contacts are provided by arginine 39 and arginine 45. FMN-binding positions include 132 to 134 (RSS), 251 to 252 (NA), glycine 296, 311 to 315 (KPIPT), and arginine 337.

The protein belongs to the chorismate synthase family. Homotetramer. FMNH2 is required as a cofactor.

It carries out the reaction 5-O-(1-carboxyvinyl)-3-phosphoshikimate = chorismate + phosphate. It participates in metabolic intermediate biosynthesis; chorismate biosynthesis; chorismate from D-erythrose 4-phosphate and phosphoenolpyruvate: step 7/7. Catalyzes the anti-1,4-elimination of the C-3 phosphate and the C-6 proR hydrogen from 5-enolpyruvylshikimate-3-phosphate (EPSP) to yield chorismate, which is the branch point compound that serves as the starting substrate for the three terminal pathways of aromatic amino acid biosynthesis. This reaction introduces a second double bond into the aromatic ring system. The sequence is that of Chorismate synthase from Staphylococcus aureus (strain MW2).